We begin with the raw amino-acid sequence, 453 residues long: Bifunctional protein GlmU (453 aa).

The pyrophosphorylase stretch occupies residues 1–225 (MNIVILAAGT…EWETLGVNSK (225 aa)). UDP-N-acetyl-alpha-D-glucosamine contacts are provided by residues 6-9 (LAAG), Lys-20, Gln-71, 76-77 (GT), 98-100 (YGD), Gly-135, Glu-150, Asn-165, and Asn-223. Mg(2+) is bound at residue Asp-100. Asn-223 contributes to the Mg(2+) binding site. The segment at 226–246 (AQLAELERIHQRNIAEALLVD) is linker. The interval 247-453 (GVTLADPARL…GYVRPVKKKS (207 aa)) is N-acetyltransferase. Residues Arg-329 and Lys-347 each coordinate UDP-N-acetyl-alpha-D-glucosamine. His-359 acts as the Proton acceptor in catalysis. UDP-N-acetyl-alpha-D-glucosamine-binding residues include Tyr-362 and Asn-373. Acetyl-CoA contacts are provided by residues Ala-376, 382 to 383 (NY), Ser-401, and Ala-419.

This sequence in the N-terminal section; belongs to the N-acetylglucosamine-1-phosphate uridyltransferase family. It in the C-terminal section; belongs to the transferase hexapeptide repeat family. As to quaternary structure, homotrimer. Requires Mg(2+) as cofactor.

Its subcellular location is the cytoplasm. The enzyme catalyses alpha-D-glucosamine 1-phosphate + acetyl-CoA = N-acetyl-alpha-D-glucosamine 1-phosphate + CoA + H(+). The catalysed reaction is N-acetyl-alpha-D-glucosamine 1-phosphate + UTP + H(+) = UDP-N-acetyl-alpha-D-glucosamine + diphosphate. Its pathway is nucleotide-sugar biosynthesis; UDP-N-acetyl-alpha-D-glucosamine biosynthesis; N-acetyl-alpha-D-glucosamine 1-phosphate from alpha-D-glucosamine 6-phosphate (route II): step 2/2. It participates in nucleotide-sugar biosynthesis; UDP-N-acetyl-alpha-D-glucosamine biosynthesis; UDP-N-acetyl-alpha-D-glucosamine from N-acetyl-alpha-D-glucosamine 1-phosphate: step 1/1. The protein operates within bacterial outer membrane biogenesis; LPS lipid A biosynthesis. Catalyzes the last two sequential reactions in the de novo biosynthetic pathway for UDP-N-acetylglucosamine (UDP-GlcNAc). The C-terminal domain catalyzes the transfer of acetyl group from acetyl coenzyme A to glucosamine-1-phosphate (GlcN-1-P) to produce N-acetylglucosamine-1-phosphate (GlcNAc-1-P), which is converted into UDP-GlcNAc by the transfer of uridine 5-monophosphate (from uridine 5-triphosphate), a reaction catalyzed by the N-terminal domain. This chain is Bifunctional protein GlmU, found in Burkholderia lata (strain ATCC 17760 / DSM 23089 / LMG 22485 / NCIMB 9086 / R18194 / 383).